The following is a 653-amino-acid chain: Leishmanolysin homolog (653 aa).

Residues 1 to 44 form the signal peptide; it reads MHAPPTATRRSGPRRTHGIMARLVRLAAGVLVVTLVIGALTALS. Residues 45–113 constitute a propeptide, activation peptide; it reads ADDAKTHPHK…ALAGDSAPDV (69 aa). Disulfide bonds link cysteine 138-cysteine 155 and cysteine 203-cysteine 242. Histidine 276 contacts Zn(2+). Residue glutamate 277 is part of the active site. The Zn(2+) site is built by histidine 280 and histidine 346. 7 disulfide bridges follow: cysteine 326–cysteine 398, cysteine 405–cysteine 468, cysteine 418–cysteine 437, cysteine 427–cysteine 502, cysteine 479–cysteine 524, cysteine 529–cysteine 579, and cysteine 549–cysteine 572. 2 N-linked (GlcNAc...) asparagine glycosylation sites follow: asparagine 383 and asparagine 409. A glycan (N-linked (GlcNAc...) asparagine) is linked at asparagine 569. Positions 590-631 are disordered; sequence ESMTNSGSGSSRPAPVEPSGSGSGSSAATTAPSPTRDGSAAA. Residues 591–600 show a composition bias toward polar residues; it reads SMTNSGSGSS. The segment covering 607–631 has biased composition (low complexity); the sequence is PSGSGSGSSAATTAPSPTRDGSAAA. Serine 628 is lipidated: GPI-anchor amidated serine. Residues 629 to 653 constitute a propeptide, removed in mature form; it reads AAADRIAPRTAAVALLALAVAAACV.

This sequence belongs to the peptidase M8 family. Requires Zn(2+) as cofactor.

The protein localises to the cell membrane. The enzyme catalyses Preference for hydrophobic residues at P1 and P1' and basic residues at P2' and P3'. A model nonapeptide is cleaved at -Ala-Tyr-|-Leu-Lys-Lys-.. In terms of biological role, plays an integral role during the infection of macrophages in the mammalian host. This Crithidia fasciculata protein is Leishmanolysin homolog (gp63).